A 468-amino-acid polypeptide reads, in one-letter code: Argininosuccinate lyase (468 aa).

This sequence belongs to the lyase 1 family. Argininosuccinate lyase subfamily.

It localises to the cytoplasm. The catalysed reaction is 2-(N(omega)-L-arginino)succinate = fumarate + L-arginine. Its pathway is amino-acid biosynthesis; L-arginine biosynthesis; L-arginine from L-ornithine and carbamoyl phosphate: step 3/3. The protein is Argininosuccinate lyase of Gloeobacter violaceus (strain ATCC 29082 / PCC 7421).